The chain runs to 151 residues: Ribosome-binding factor A (151 aa).

The tract at residues 116-151 (DAEVARAAANARPAGDPDPYREPRPADDDDEDDEDE) is disordered. Over residues 120–129 (ARAAANARPA) the composition is skewed to low complexity. Residues 142 to 151 (DDDDEDDEDE) are compositionally biased toward acidic residues.

This sequence belongs to the RbfA family. In terms of assembly, monomer. Binds 30S ribosomal subunits, but not 50S ribosomal subunits or 70S ribosomes.

It localises to the cytoplasm. One of several proteins that assist in the late maturation steps of the functional core of the 30S ribosomal subunit. Associates with free 30S ribosomal subunits (but not with 30S subunits that are part of 70S ribosomes or polysomes). Required for efficient processing of 16S rRNA. May interact with the 5'-terminal helix region of 16S rRNA. The polypeptide is Ribosome-binding factor A (Thermobifida fusca (strain YX)).